A 432-amino-acid polypeptide reads, in one-letter code: Glutamyl-tRNA reductase (432 aa).

Substrate contacts are provided by residues 55-58 (TCNR), Ser114, 119-121 (ETQ), and Gln125. Cys56 functions as the Nucleophile in the catalytic mechanism. 194-199 (GAGEMI) contributes to the NADP(+) binding site.

It belongs to the glutamyl-tRNA reductase family. In terms of assembly, homodimer.

It catalyses the reaction (S)-4-amino-5-oxopentanoate + tRNA(Glu) + NADP(+) = L-glutamyl-tRNA(Glu) + NADPH + H(+). It functions in the pathway porphyrin-containing compound metabolism; protoporphyrin-IX biosynthesis; 5-aminolevulinate from L-glutamyl-tRNA(Glu): step 1/2. In terms of biological role, catalyzes the NADPH-dependent reduction of glutamyl-tRNA(Glu) to glutamate 1-semialdehyde (GSA). The protein is Glutamyl-tRNA reductase of Burkholderia pseudomallei (strain 1710b).